The following is a 700-amino-acid chain: Putative proline-rich receptor-like protein kinase PERK6 (700 aa).

The tract at residues 1–180 (MAEGQSPENS…SGGGSNSSGN (180 aa)) is disordered. Topologically, residues 1–186 (MAEGQSPENS…SSGNNEPNTA (186 aa)) are extracellular. Composition is skewed to pro residues over residues 9–19 (NSPPSPTPPSP) and 29–47 (SPPP…PPPD). Over residues 48 to 137 (DSSNGSPQPP…GNNNDNNNQN (90 aa)) the composition is skewed to low complexity. Residue Asn176 is glycosylated (N-linked (GlcNAc...) asparagine). A helical transmembrane segment spans residues 187–207 (AIVGIVAGAGLLFLVMILFCV). The Cytoplasmic portion of the chain corresponds to 208–700 (CCCRKKKKKH…NNKTTPSRDH (493 aa)). Residues 249 to 315 (NLSQQYPGSN…GPSVPPPHPS (67 aa)) form a disordered region. Positions 255–265 (PGSNGNNNWMN) are enriched in low complexity. Residues 266 to 286 (SPPPPPPGSWQPSPPPPPPPV) show a composition bias toward pro residues. At Thr326 the chain carries Phosphothreonine. Positions 337 to 615 (FSQSRLLGQG…VRALEGDATL (279 aa)) constitute a Protein kinase domain. Residues 343–351 (LGQGGFGYV) and Lys365 contribute to the ATP site. Tyr410 carries the phosphotyrosine modification. Asp461 serves as the catalytic Proton acceptor. Residues Ser465 and Ser494 each carry the phosphoserine modification. Phosphothreonine is present on residues Thr495 and Thr500. Tyr508 carries the post-translational modification Phosphotyrosine. Disordered regions lie at residues 616-642 (DDLS…DSST) and 659-700 (EYGA…SRDH). A compositionally biased stretch (polar residues) spans 689–700 (ANNNKTTPSRDH).

It belongs to the protein kinase superfamily. Ser/Thr protein kinase family. As to expression, mostly expressed in flower buds.

The protein localises to the cell membrane. It catalyses the reaction L-seryl-[protein] + ATP = O-phospho-L-seryl-[protein] + ADP + H(+). The enzyme catalyses L-threonyl-[protein] + ATP = O-phospho-L-threonyl-[protein] + ADP + H(+). This is Putative proline-rich receptor-like protein kinase PERK6 (PERK6) from Arabidopsis thaliana (Mouse-ear cress).